A 483-amino-acid chain; its full sequence is MHQFTLAEIARGLADKSFSSEELTRALLARIKQLDPQINSFISVTEDLALGQARAADARRAAGETGALLGAPIAHKDLFCTNGVRTSCGSKMLDNFKAPYDATVVAKLAEAGMVTLGKTNMDEFAMGSANESSHYGAVKNPWNLEHVPGGSSGGSAAAVAARLLPATTGTDTGGSIRQPAALTNLTGLKPTYGRVSRWGMIAYASSLDQGGPLARTAEDCALLLQGMAGFDAKDSTSIEEPVPDYSANLNASLQGLRIGLPKEYFGAGLDPRIAELVQASVKELEKLGAVVKEISLPNMQHAIPAYYVIAPAEASSNLSRFDGVRFGYRCEEPKDLTDLYKRSRGEGFGVEVQRRIMVGTYALSAGYYDAYYVKAQQIRRLIKNDFMAAFNDVDLILGPTTPNPAWKLGAKSSDPVAAYLEDVYTINANLAGLPGLSMPAGFVDGLPVGVQLLAPYFQEGRLLNVAHRYQQVTDWHTRAPNGF.

Residues Lys76 and Ser151 each act as charge relay system in the active site. Catalysis depends on Ser175, which acts as the Acyl-ester intermediate.

The protein belongs to the amidase family. GatA subfamily. Heterotrimer of A, B and C subunits.

It carries out the reaction L-glutamyl-tRNA(Gln) + L-glutamine + ATP + H2O = L-glutaminyl-tRNA(Gln) + L-glutamate + ADP + phosphate + H(+). Allows the formation of correctly charged Gln-tRNA(Gln) through the transamidation of misacylated Glu-tRNA(Gln) in organisms which lack glutaminyl-tRNA synthetase. The reaction takes place in the presence of glutamine and ATP through an activated gamma-phospho-Glu-tRNA(Gln). In Pseudomonas putida (strain GB-1), this protein is Glutamyl-tRNA(Gln) amidotransferase subunit A.